The sequence spans 477 residues: Glycogen synthase (477 aa).

Residue lysine 15 participates in ADP-alpha-D-glucose binding.

Belongs to the glycosyltransferase 1 family. Bacterial/plant glycogen synthase subfamily.

It catalyses the reaction [(1-&gt;4)-alpha-D-glucosyl](n) + ADP-alpha-D-glucose = [(1-&gt;4)-alpha-D-glucosyl](n+1) + ADP + H(+). It participates in glycan biosynthesis; glycogen biosynthesis. Its function is as follows. Synthesizes alpha-1,4-glucan chains using ADP-glucose. The protein is Glycogen synthase of Streptococcus pneumoniae (strain 70585).